The chain runs to 466 residues: MSTRSVSSSSYRRMFGGSGTSSRPSSNRSYVTTSTRTYSLGSALRPSTSRSLYSSSPGGAYVTRSSAVRLRSSMPGVRLLQDSVDFSLADAINTEFKNTRTNEKVELQELNDRFANYIDKVRFLEQQNKILLAELEQLKGQGKSRLGDLYEEEMRELRRQVDQLTNDKARVEVERDNLAEDIMRLREKLQEEMLQREEAESTLQSFRQDVDNASLARLDLERKVESLQEEIAFLKKLHDEEIQELQAQIQEQHVQIDVDVSKPDLTAALRDVRQQYESVAAKNLQEAEEWYKSKFADLSEAANRNNDALRQAKQESNEYRRQVQSLTCEVDALKGTNESLERQMREMEENFALEAANYQDTIGRLQDEIQNMKEEMARHLREYQDLLNVKMALDIEIATYRKLLEGEESRISLPLPNFSSLNLRETNLESLPLVDTHSKRTLLIKTVETRDGQVINETSQHHDDLE.

Composition is skewed to low complexity over residues 1-13 (MSTR…SYRR) and 20-33 (TSSR…YVTT). The segment at 1–33 (MSTRSVSSSSYRRMFGGSGTSSRPSSNRSYVTT) is disordered. Residue Ser-2 is modified to N-acetylserine. The tract at residues 2–95 (STRSVSSSSY…FSLADAINTE (94 aa)) is head. Position 5 is a phosphoserine (Ser-5). Ser-7 carries the post-translational modification Phosphoserine; by PKA and PKC; alternate. The O-linked (GlcNAc) serine; alternate glycan is linked to Ser-7. Ser-8 is subject to Phosphoserine. A phosphoserine; by PKC mark is found at Ser-9 and Ser-10. Residue Thr-20 is modified to Phosphothreonine. Phosphoserine is present on residues Ser-25 and Ser-26. Residue Thr-33 is glycosylated (O-linked (GlcNAc) threonine). The O-linked (GlcNAc) serine; alternate glycan is linked to Ser-34. At Ser-34 the chain carries Phosphoserine; by PKC; alternate. Ser-39 is modified (phosphoserine; by CaMK2, PKA, PKC and ROCK2). Ser-42 carries the post-translational modification Phosphoserine; by PKC. Ser-47 carries the phosphoserine; by PKA modification. Phosphoserine occurs at positions 49 and 51. Residue Tyr-53 is modified to Phosphotyrosine. Ser-55 and Ser-56 each carry phosphoserine. Tyr-61 carries the phosphotyrosine modification. A Phosphoserine; by PKA and PKC modification is found at Ser-66. The residue at position 72 (Ser-72) is a Phosphoserine; by AURKB and ROCK2. Residues Ser-73, Ser-83, and Ser-87 each carry the phosphoserine modification. The interval 96 to 131 (FKNTRTNEKVELQELNDRFANYIDKVRFLEQQNKIL) is coil 1A. Positions 96 to 131 (FKNTRTNEKVELQELNDRFANYIDKVRFLEQQNKIL) form a coiled coil. Residues 103–411 (EKVELQELND…KLLEGEESRI (309 aa)) form the IF rod domain. Lys-104 participates in a covalent cross-link: Glycyl lysine isopeptide (Lys-Gly) (interchain with G-Cter in SUMO2). Tyr-117 bears the Phosphotyrosine mark. 3 positions are modified to N6-acetyllysine; alternate: Lys-120, Lys-129, and Lys-139. Residues Lys-120 and Lys-129 each carry the N6-succinyllysine; alternate modification. Residues Lys-120, Lys-129, and Lys-139 each participate in a glycyl lysine isopeptide (Lys-Gly) (interchain with G-Cter in SUMO2); alternate cross-link. Residues 132 to 153 (LAELEQLKGQGKSRLGDLYEEE) are linker 1. Ser-144 is subject to Phosphoserine. Residues 154–245 (MRELRRQVDQ…KLHDEEIQEL (92 aa)) adopt a coiled-coil conformation. The segment at 154–245 (MRELRRQVDQ…KLHDEEIQEL (92 aa)) is coil 1B. Lys-168 bears the N6-acetyllysine mark. At Lys-188 the chain carries N6-acetyllysine; alternate. Lys-188 carries the N6-succinyllysine; alternate modification. Ser-214 bears the Phosphoserine mark. An N6-acetyllysine; alternate modification is found at Lys-223. Lys-223 participates in a covalent cross-link: Glycyl lysine isopeptide (Lys-Gly) (interchain with G-Cter in SUMO2); alternate. Phosphoserine is present on Ser-226. Lys-235 bears the N6-acetyllysine mark. Residues 246-268 (QAQIQEQHVQIDVDVSKPDLTAA) form a linker 12 region. A Glycyl lysine isopeptide (Lys-Gly) (interchain with G-Cter in SUMO2) cross-link involves residue Lys-262. The segment at 269-407 (LRDVRQQYES…ATYRKLLEGE (139 aa)) is coil 2. Residue Lys-294 is modified to N6-acetyllysine; alternate. Residue Lys-294 is modified to N6-succinyllysine; alternate. A Glycyl lysine isopeptide (Lys-Gly) (interchain with G-Cter in SUMO2); alternate cross-link involves residue Lys-294. Ser-299 is subject to Phosphoserine. Residues 303–407 (NRNNDALRQA…ATYRKLLEGE (105 aa)) are a coiled coil. A Glycyl lysine isopeptide (Lys-Gly) (interchain with G-Cter in SUMO2) cross-link involves residue Lys-313. At Ser-325 the chain carries Phosphoserine. Residues 326–329 (LTCE) carry the [IL]-x-C-x-x-[DE] motif motif. Lys-373 is modified (N6-acetyllysine; alternate). Residue Lys-373 forms a Glycyl lysine isopeptide (Lys-Gly) (interchain with G-Cter in SUMO2); alternate linkage. Residues 408-466 (ESRISLPLPNFSSLNLRETNLESLPLVDTHSKRTLLIKTVETRDGQVINETSQHHDDLE) form a tail region. Ser-409, Ser-412, Ser-419, and Ser-420 each carry phosphoserine. The residue at position 426 (Thr-426) is a Phosphothreonine. Position 430 is a phosphoserine (Ser-430). Position 436 is a phosphothreonine (Thr-436). Residue Ser-438 is modified to Phosphoserine. A Glycyl lysine isopeptide (Lys-Gly) (interchain with G-Cter in SUMO2) cross-link involves residue Lys-439. N6-acetyllysine; alternate is present on Lys-445. An N6-succinyllysine; alternate modification is found at Lys-445. Lys-445 participates in a covalent cross-link: Glycyl lysine isopeptide (Lys-Gly) (interchain with G-Cter in SUMO2); alternate. Residue Lys-445 forms a Glycyl lysine isopeptide (Lys-Gly) (interchain with G-Cter in SUMO1); alternate linkage. Thr-446 and Thr-458 each carry phosphothreonine. Phosphoserine is present on Ser-459.

The protein belongs to the intermediate filament family. Homomer assembled from elementary dimers. Identified in complexes that contain VIM, EZR, AHNAK, BFSP1, BFSP2, ANK2, PLEC, PRX and spectrin. Interacts with BCAS3. Interacts with LGSN. Interacts with SYNM. Interacts (via rod region) with PLEC (via CH 1 domain). Interacts with STK33. Interacts with LARP6. Interacts with RAB8B. Interacts with TOR1A; the interaction associates TOR1A with the cytoskeleton. Interacts with TOR1AIP1. Interacts with TOR1AIP1. Interacts with DIAPH1. Interacts with EPPK1; interaction is dependent of higher-order structure of intermediate filament. Interacts with the non-receptor tyrosine kinase SRMS; the interaction leads to phosphorylation of VIM. Interacts with NOD2. Interacts (via head region) with CORO1C. Interacts with HDGF. Interacts with PRKCE (via phorbol-ester/DAG-type 2 domain). Interacts with BFSP2. Interacts with PPL. Interacts with PKP1 and PKP2. Interacts with SCRIB (via PDZ domains); the interaction protects SCRIB from proteasomal degradation and facilitates SCRIB localization to intermediate filaments, the interaction is reduced by cell contact inhibition. Post-translationally, one of the most prominent phosphoproteins in various cells of mesenchymal origin. Phosphorylation is enhanced during cell division, at which time vimentin filaments are significantly reorganized. Phosphorylation by PKN1 inhibits the formation of filaments. Filament disassembly during mitosis is promoted by phosphorylation at Ser-55 as well as by nestin. Phosphorylated at Ser-56 by CDK5 during neutrophil secretion in the cytoplasm. Phosphorylated by STK33. Phosphorylated on tyrosine residues by SRMS. In terms of processing, S-nitrosylation is induced by interferon-gamma and oxidatively-modified low-densitity lipoprotein (LDL(ox)) possibly implicating the iNOS-S100A8/9 transnitrosylase complex.

It localises to the cytoplasm. The protein localises to the cytoskeleton. It is found in the nucleus matrix. The protein resides in the cell membrane. Its function is as follows. Vimentins are class-III intermediate filaments found in various non-epithelial cells, especially mesenchymal cells. Vimentin is attached to the nucleus, endoplasmic reticulum, and mitochondria, either laterally or terminally. Plays a role in cell directional movement, orientation, cell sheet organization and Golgi complex polarization at the cell migration front. Protects SCRIB from proteasomal degradation and facilitates its localization to intermediate filaments in a cell contact-mediated manner. In terms of biological role, involved with LARP6 in the stabilization of type I collagen mRNAs for CO1A1 and CO1A2. This is Vimentin from Rattus norvegicus (Rat).